A 318-amino-acid polypeptide reads, in one-letter code: NLP effector protein 9 (318 aa).

Residues 1–19 form the signal peptide; that stretch reads MRLFAFLWSSVAFLSTVQA. The segment covering 24 to 35 has biased composition (low complexity); that stretch reads TASQTQDDSSTP. Disordered stretches follow at residues 24 to 43 and 50 to 93; these read TASQ…PDKY and LRTK…PAPT. A compositionally biased stretch (polar residues) spans 55–65; that stretch reads PMATPNRTIMP. N-linked (GlcNAc...) asparagine glycosylation is present at asparagine 60. A compositionally biased stretch (pro residues) spans 73–93; sequence PEPPTPEPTYLPTLSPTPAPT. The Conserved undecapeptide motif I signature appears at 185–195; the sequence is AIMYSWYFPKD. The Hepta-peptide GHRHDWE motif II signature appears at 202–208; it reads GHRHDWE.

This sequence belongs to the Necrosis inducing protein (NPP1) family.

It localises to the secreted. Functionally, secreted effector that contributes to virulence during infection by P.capsici. Induces distinct chlorosis at 3 days after inoculation of host C.annuum leaves, and all the chlorotic areas gradually turn brown and become moderately necrotic at 7 days after inoculation. Caused only small necrotic areas at 7 days after non-host N.benthamiana leaves infection. This is NLP effector protein 9 from Phytophthora capsici.